A 398-amino-acid chain; its full sequence is Flavin-containing monooxygenase ustF1 (398 aa).

Residues 1–22 (MTVSQVRRVAVIGAGISGVVST) form the signal peptide. 13–18 (GAGISG) is an FAD binding site. N-linked (GlcNAc...) asparagine glycosylation is found at Asn53, Asn57, Asn119, and Asn126. 194–199 (GGGVSS) lines the NADP(+) pocket. Residues Asn236, Asn243, and Asn271 are each glycosylated (N-linked (GlcNAc...) asparagine).

The protein belongs to the FMO family.

It functions in the pathway mycotoxin biosynthesis. In terms of biological role, flavin-containing monooxygenase; part of the gene cluster that mediates the biosynthesis of the secondary metabolite ustiloxin B, an antimitotic tetrapeptide. First, ustA is processed by the subtilisin-like endoprotease Kex2 that is outside the ustiloxin B gene cluster, at the C-terminal side of Arg-Lys, after transfer to Golgi apparatus through the endoplasmic reticulum (ER). Cleavage by KEX2 generates 16 peptides YAIG-I to YAIG-XVI. To process the precursor peptide further, at least two peptidases are necessary to cleave the N-terminal and C-terminal sides of the Tyr-Ala-Ile-Gly core peptide which serves as backbone for the synthesis of ustiloxin B, through cyclization and modification of the tyrosine with a non-protein coding amino acid, norvaline. One of the two peptidases must be the serine peptidase ustP; and the other pepdidase is probably ustH. Macrocyclization of the core peptide derived from ustA requires the tyrosinase ustQ, as well as the homologous oxidases ustYa and ustYb, and leads to the production of the first cyclization product N-desmethylustiloxin F. For the formation of N-desmethylustiloxin F, three oxidation steps are required, hydroxylation at the benzylic position, hydroxylation at either the aromatic ring of Tyr or beta-position of Ile, and oxidative cyclization. UstQ may catalyze the oxidation of a phenol moiety, whereas the ustYa and ustYb are most likely responsible for the remaining two-step oxidations. N-desmethylustiloxin F is then methylated by ustM to yield ustiloxin F which in turn substrate of the cytochrome P450 monooxygenase ustC which catalyzes the formation of S-deoxyustiloxin H. The flavoprotein monooxygenases ustF1 and ustF2 then participate in the modification of the side chain of S-deoxyustiloxin H, leading to the synthesis of an oxime intermediate, via ustiloxin H. Finally, carboxylative dehydration performed by the cysteine desulfurase-like protein ustD yields ustiloxin B. The protein is Flavin-containing monooxygenase ustF1 of Aspergillus flavus (strain ATCC 200026 / FGSC A1120 / IAM 13836 / NRRL 3357 / JCM 12722 / SRRC 167).